The primary structure comprises 474 residues: Glutamate--tRNA ligase (474 aa).

Residues 9 to 19 (PSPTGYLHVGG) carry the 'HIGH' region motif. The 'KMSKS' region motif lies at 240–244 (KLSKR). Lys-243 lines the ATP pocket.

This sequence belongs to the class-I aminoacyl-tRNA synthetase family. Glutamate--tRNA ligase type 1 subfamily. As to quaternary structure, monomer.

Its subcellular location is the cytoplasm. It carries out the reaction tRNA(Glu) + L-glutamate + ATP = L-glutamyl-tRNA(Glu) + AMP + diphosphate. Its function is as follows. Catalyzes the attachment of glutamate to tRNA(Glu) in a two-step reaction: glutamate is first activated by ATP to form Glu-AMP and then transferred to the acceptor end of tRNA(Glu). The polypeptide is Glutamate--tRNA ligase (Vibrio vulnificus (strain YJ016)).